Here is a 285-residue protein sequence, read N- to C-terminus: 2-dehydro-3-deoxyphosphooctonate aldolase (285 aa).

Belongs to the KdsA family.

It is found in the cytoplasm. It catalyses the reaction D-arabinose 5-phosphate + phosphoenolpyruvate + H2O = 3-deoxy-alpha-D-manno-2-octulosonate-8-phosphate + phosphate. It participates in carbohydrate biosynthesis; 3-deoxy-D-manno-octulosonate biosynthesis; 3-deoxy-D-manno-octulosonate from D-ribulose 5-phosphate: step 2/3. The protein operates within bacterial outer membrane biogenesis; lipopolysaccharide biosynthesis. This is 2-dehydro-3-deoxyphosphooctonate aldolase from Bordetella parapertussis (strain 12822 / ATCC BAA-587 / NCTC 13253).